Consider the following 2564-residue polypeptide: Spectrin beta chain, non-erythrocytic 4 (2564 aa).

The interval 1–37 (MAQVPGEVDNMEGLPAPNNNPAARWESPDRGWEREQP) is disordered. Residues 1 to 282 (MAQVPGEVDN…IITYVVSFYH (282 aa)) form an actin-binding region. Residues 26 to 36 (ESPDRGWEREQ) show a composition bias toward basic and acidic residues. 2 consecutive Calponin-homology (CH) domains span residues 61–165 (AVQK…LRFQ) and 180–285 (RSAK…HYFS). Spectrin repeat units follow at residues 311–418 (IERY…AALR), 430–533 (LAQR…RLEQ), 536–641 (ALQK…AELE), 774–879 (ALHQ…WLRD), 884–982 (YRMF…RKEE), 1089–1196 (RLQR…EALV), 1306–1407 (ELQH…RQLF), 1412–1512 (ADQL…RLLL), 1515–1617 (KELH…QQVL), 1623–1725 (VEQY…ALEQ), 1728–1830 (WLYQ…AQLL), 1835–1935 (ELHK…EDAR), 1944–2046 (ALRF…WLQQ), and 2049–2123 (EVHQ…QSKQ). The segment at 1853–1872 (KRRRLPRLTTPPEPRPSASS) is disordered. A compositionally biased stretch (low complexity) spans 2208–2225 (PAAPEDAAETPATPAAAE). Disordered stretches follow at residues 2208–2439 (PAAP…KSSN) and 2533–2564 (ARWG…GRRK). 3 stretches are compositionally biased toward basic and acidic residues: residues 2227-2254 (VRPR…RQES), 2268-2278 (ERQESAEHEAA), and 2287-2318 (EQME…DLVK). A compositionally biased stretch (pro residues) spans 2343–2355 (PSLPQPRELPPGR). 2 stretches are compositionally biased toward basic and acidic residues: residues 2362–2377 (LPER…ARDR) and 2424–2435 (FLLRKRELDANR). The PH domain occupies 2418–2527 (TVQHEGFLLR…WLEAVASSVA (110 aa)). Polar residues predominate over residues 2538–2547 (TLPTTSSTDE). A compositionally biased stretch (basic and acidic residues) spans 2548–2564 (GNPKREGGDRRASGRRK).

This sequence belongs to the spectrin family. Expressed in skeletal muscle at the sarcolemma and in the muscle capillaries (at protein level). Abundantly expressed in brain and pancreatic islets.

The protein resides in the cytoplasm. It is found in the cytoskeleton. The protein localises to the cell cortex. The sequence is that of Spectrin beta chain, non-erythrocytic 4 (SPTBN4) from Homo sapiens (Human).